Consider the following 236-residue polypeptide: Purine nucleoside phosphorylase CA_C1699 (236 aa).

Residues H62, C97, and H114 each contribute to the Zn(2+) site.

This sequence belongs to the purine nucleoside phosphorylase YfiH/LACC1 family. As to quaternary structure, homodimer. Requires Cu(2+) as cofactor. Zn(2+) serves as cofactor.

The catalysed reaction is adenosine + phosphate = alpha-D-ribose 1-phosphate + adenine. The enzyme catalyses S-methyl-5'-thioadenosine + phosphate = 5-(methylsulfanyl)-alpha-D-ribose 1-phosphate + adenine. It carries out the reaction inosine + phosphate = alpha-D-ribose 1-phosphate + hypoxanthine. It catalyses the reaction adenosine + H2O + H(+) = inosine + NH4(+). In terms of biological role, purine nucleoside enzyme that catalyzes the phosphorolysis of adenosine and inosine nucleosides, yielding D-ribose 1-phosphate and the respective free bases, adenine and hypoxanthine. Also catalyzes the phosphorolysis of S-methyl-5'-thioadenosine into adenine and S-methyl-5-thio-alpha-D-ribose 1-phosphate. Also has adenosine deaminase activity. This Clostridium acetobutylicum (strain ATCC 824 / DSM 792 / JCM 1419 / IAM 19013 / LMG 5710 / NBRC 13948 / NRRL B-527 / VKM B-1787 / 2291 / W) protein is Purine nucleoside phosphorylase CA_C1699.